An 80-amino-acid polypeptide reads, in one-letter code: uncharacterized protein (80 aa).

A helical membrane pass occupies residues 12–32 (FKIIALILLIVLIINLSYKLF).

The protein resides in the membrane. This is an uncharacterized protein from Saccharomyces cerevisiae (strain ATCC 204508 / S288c) (Baker's yeast).